The chain runs to 461 residues: Ornithine decarboxylase (461 aa).

Residue K69 is modified to N6-(pyridoxal phosphate)lysine. Pyridoxal 5'-phosphate is bound by residues S200, G237, and E274–R277. Phosphoserine; by CK2 is present on S303. Y331–D332 contacts substrate. C360 serves as the catalytic Proton donor; shared with dimeric partner. C360 is modified (S-nitrosocysteine). D361 is a substrate binding site. Y389 serves as a coordination point for pyridoxal 5'-phosphate.

It belongs to the Orn/Lys/Arg decarboxylase class-II family. Homodimer. Only the dimer is catalytically active, as the active sites are constructed of residues from both monomers. Pyridoxal 5'-phosphate serves as cofactor.

The catalysed reaction is L-ornithine + H(+) = putrescine + CO2. It functions in the pathway amine and polyamine biosynthesis; putrescine biosynthesis via L-ornithine pathway; putrescine from L-ornithine: step 1/1. Its activity is regulated as follows. Inhibited by antizymes (AZs) OAZ1, OAZ2 and OAZ3 in response to polyamine levels. AZs inhibit the assembly of the functional homodimer by binding to ODC monomers. Additionally, OAZ1 targets ODC monomers for ubiquitin-independent proteolytic destruction by the 26S proteasome. Its function is as follows. Catalyzes the first and rate-limiting step of polyamine biosynthesis that converts ornithine into putrescine, which is the precursor for the polyamines, spermidine and spermine. Polyamines are essential for cell proliferation and are implicated in cellular processes, ranging from DNA replication to apoptosis. This is Ornithine decarboxylase (Odc1) from Rattus norvegicus (Rat).